The sequence spans 177 residues: Large ribosomal subunit protein uL5m (177 aa).

It belongs to the universal ribosomal protein uL5 family.

It localises to the mitochondrion. The sequence is that of Large ribosomal subunit protein uL5m (RPL5) from Acanthamoeba castellanii (Amoeba).